A 181-amino-acid chain; its full sequence is K99 fimbrial protein (181 aa).

An N-terminal signal peptide occupies residues 1 to 22 (MKKTLLAIILGGMAFATTNASA). A disulfide bond links Cys-38 and Cys-79.

Belongs to the fimbrial protein family.

Its subcellular location is the fimbrium. Fimbriae (also called pili), polar filaments radiating from the surface of the bacterium to a length of 0.5-1.5 micrometers and numbering 100-300 per cell, enable bacteria to colonize the epithelium of specific host organs. Its function is as follows. FanC is the main component of the K99 fimbriae. This Escherichia coli protein is K99 fimbrial protein (fanC).